Reading from the N-terminus, the 284-residue chain is Tropomyosin-1 (284 aa).

The stretch at 1–284 (MDGIKKKMIA…DQTFAELTGY (284 aa)) forms a coiled coil. Residues 111–131 (TKLEEASKTAEESERGRKDLE) form a disordered region.

Belongs to the tropomyosin family. In terms of assembly, homodimer.

Functionally, tropomyosin, in association with the troponin complex, plays a central role in the calcium dependent regulation of muscle contraction. This Schistosoma mansoni (Blood fluke) protein is Tropomyosin-1.